Reading from the N-terminus, the 196-residue chain is MSRYRGPRLKKIRRLGALPGLTRKTPKSGSNLKKKFYSGKKEQYRIRLQEKQKLRFHYGLTERQLLRYVHIAGKAKKSTGQVLLQLLEMRLDNIVFRLGMASTIPGARQLVNHRHILVNGRIVDIPSFRCKPRDIITTKDNQRSKRLVQNSIASFDPGRLPKHLTVDTLQYKGLVQKILDRKWVGLKINELLFVEY.

The region spanning methionine 89 to asparagine 150 is the S4 RNA-binding domain.

Belongs to the universal ribosomal protein uS4 family. Part of the 30S ribosomal subunit. Contacts protein S5. The interaction surface between S4 and S5 is involved in control of translational fidelity.

The protein resides in the plastid. The protein localises to the chloroplast. Functionally, one of the primary rRNA binding proteins, it binds directly to 16S rRNA where it nucleates assembly of the body of the 30S subunit. With S5 and S12 plays an important role in translational accuracy. This Eleusine indica (Goosegrass) protein is Small ribosomal subunit protein uS4c (rps4).